A 582-amino-acid chain; its full sequence is MEPSKLFTMSDNATFAPGPVVNAADKKTFRTCFRILVLSVQAVTLILVIVTLGELVRMINDQGLSNQLSSIADKIRESATMIASAVGVMNQVIHGVTVSLPLQIEGNQNQLLSTLATIRTGKKQVSNCSTNIPLVNDLRFINGINKFIIEDYATHDFSIGHPLNMPSFIPTATSPNGCTRIPSFSLGKTHWCYTHNVINANCKDHTSSNQYISMGILVQTASGYPMFKTLKIQYLSDGLNRKSCSIATVPDGCAMYCYVSTQLETDDYAGSSPPTQKLTLLFYNDTVTERTISPTGLEGNWATLVPGVGSGIYFENKLIFPAYGGVLPNSTLGVKSAREFFRPVNPYNPCSGPQQDLDQRALRSYFPSYFSNRRVQSAFLVCAWNQILVTNCELVVPSNNQTLMGAEGRVLLINNRLLYYQRSTSWWPYELLYEISFTFTNSGQSSVNMSWIPIYSFTRPGSGNCSGENVCPTACVSGVYLDPWPLTPYSHQSGINRNFYFTGALLNSSTTRVNPTLYVSALNNLKVLAPYGNQGLFASYTTTTCFQDTGDASVYCVYIMELASNIVGEFQILPVLTRLTIT.

Residues 1-34 (MEPSKLFTMSDNATFAPGPVVNAADKKTFRTCFR) are Intravirion-facing. A helical transmembrane segment spans residues 35–55 (ILVLSVQAVTLILVIVTLGEL). The Virion surface portion of the chain corresponds to 56-582 (VRMINDQGLS…LPVLTRLTIT (527 aa)). Disulfide bonds link Cys178/Cys202, Cys192/Cys253, and Cys244/Cys257. Asn284 and Asn329 each carry an N-linked (GlcNAc...) asparagine; by host glycan. Intrachain disulfides connect Cys350–Cys471, Cys382–Cys392, and Cys465–Cys475. Residues Asn400 and Asn448 are each glycosylated (N-linked (GlcNAc...) asparagine; by host). N-linked (GlcNAc...) asparagine; by host glycosylation is present at Asn507. Cys545 and Cys556 are joined by a disulfide.

The protein belongs to the paramyxoviruses hemagglutinin-neuraminidase family. Homotetramer; composed of disulfide-linked homodimers. Interacts with F protein trimer.

The protein localises to the virion membrane. Its subcellular location is the host cell membrane. The catalysed reaction is Hydrolysis of alpha-(2-&gt;3)-, alpha-(2-&gt;6)-, alpha-(2-&gt;8)- glycosidic linkages of terminal sialic acid residues in oligosaccharides, glycoproteins, glycolipids, colominic acid and synthetic substrates.. Attaches the virus to alpha-2,3-linked sialic acid-containing cell receptors and thereby initiating infection. Binding of HN protein to the receptor induces a conformational change that allows the F protein to trigger virion/cell membranes fusion. Binds to the glycan motifs sialyl Lewis (SLe) and GM2 ganglioside (GM2-glycan). In terms of biological role, neuraminidase activity ensures the efficient spread of the virus by dissociating the mature virions from the neuraminic acid containing glycoproteins. The polypeptide is Hemagglutinin-neuraminidase (Mumps orthorubulavirus (MuV)).